The following is a 465-amino-acid chain: Lactaldehyde dehydrogenase (465 aa).

220 to 225 is an NAD(+) binding site; the sequence is GSVEIG. Residues E240 and C274 contribute to the active site.

It belongs to the aldehyde dehydrogenase family. In terms of assembly, homotetramer.

The catalysed reaction is (S)-lactaldehyde + NAD(+) + H2O = (S)-lactate + NADH + 2 H(+). It functions in the pathway cofactor biosynthesis; coenzyme F420 biosynthesis. Functionally, involved in F420 biosynthesis through the oxidation of lactaldehyde to lactate. The polypeptide is Lactaldehyde dehydrogenase (Methanococcus maripaludis (strain C7 / ATCC BAA-1331)).